Reading from the N-terminus, the 396-residue chain is Elongation factor Tu (396 aa).

Residues 10-206 form the tr-type G domain; it reads KPHVNVGTIG…ALDSYIPTPE (197 aa). The interval 19–26 is G1; it reads GHVDHGKT. Residue 19 to 26 coordinates GTP; sequence GHVDHGKT. Residue Thr-26 participates in Mg(2+) binding. Positions 60–64 are G2; that stretch reads GITIN. The interval 81–84 is G3; that stretch reads DCPG. Residues 81–85 and 136–139 contribute to the GTP site; these read DCPGH and NKCD. The tract at residues 136-139 is G4; sequence NKCD. The G5 stretch occupies residues 174–176; it reads SAL.

It belongs to the TRAFAC class translation factor GTPase superfamily. Classic translation factor GTPase family. EF-Tu/EF-1A subfamily. Monomer.

It localises to the cytoplasm. The catalysed reaction is GTP + H2O = GDP + phosphate + H(+). Functionally, GTP hydrolase that promotes the GTP-dependent binding of aminoacyl-tRNA to the A-site of ribosomes during protein biosynthesis. In Azoarcus sp. (strain BH72), this protein is Elongation factor Tu.